We begin with the raw amino-acid sequence, 448 residues long: Trigger factor (448 aa).

A PPIase FKBP-type domain is found at 172 to 257 (GDRVTVDFVG…MKKIEWPHLP (86 aa)).

It belongs to the FKBP-type PPIase family. Tig subfamily.

It localises to the cytoplasm. It carries out the reaction [protein]-peptidylproline (omega=180) = [protein]-peptidylproline (omega=0). Functionally, involved in protein export. Acts as a chaperone by maintaining the newly synthesized protein in an open conformation. Functions as a peptidyl-prolyl cis-trans isomerase. The polypeptide is Trigger factor (Burkholderia cenocepacia (strain HI2424)).